The primary structure comprises 523 residues: Probable methylmalonate-semialdehyde/malonate-semialdehyde dehydrogenase [acylating], mitochondrial (523 aa).

The N-terminal 22 residues, 1–22 (MLSRLARVQPKCQQLAHFSTSK), are a transit peptide targeting the mitochondrion. NAD(+) is bound by residues Phe175, Lys199, and Glu202. The active-site Nucleophile is Cys307. Glu407 is an NAD(+) binding site.

It belongs to the aldehyde dehydrogenase family. Homodimer.

It localises to the mitochondrion. The enzyme catalyses 2-methyl-3-oxopropanoate + NAD(+) + CoA + H2O = propanoyl-CoA + hydrogencarbonate + NADH + H(+). It carries out the reaction 3-oxopropanoate + NAD(+) + CoA + H2O = hydrogencarbonate + acetyl-CoA + NADH + H(+). In terms of biological role, probable malonate and methylmalonate semialdehyde dehydrogenase involved in the catabolism of valine, thymine, and compounds catabolized by way of beta-alanine, including uracil and cytidine. The sequence is that of Probable methylmalonate-semialdehyde/malonate-semialdehyde dehydrogenase [acylating], mitochondrial (alh-8) from Caenorhabditis elegans.